We begin with the raw amino-acid sequence, 443 residues long: UDP-N-acetylmuramate--L-alanine ligase (443 aa).

110–116 (GAHGKTS) serves as a coordination point for ATP.

The protein belongs to the MurCDEF family.

Its subcellular location is the cytoplasm. It carries out the reaction UDP-N-acetyl-alpha-D-muramate + L-alanine + ATP = UDP-N-acetyl-alpha-D-muramoyl-L-alanine + ADP + phosphate + H(+). It participates in cell wall biogenesis; peptidoglycan biosynthesis. Functionally, cell wall formation. The sequence is that of UDP-N-acetylmuramate--L-alanine ligase from Lactococcus lactis subsp. cremoris (strain SK11).